A 118-amino-acid polypeptide reads, in one-letter code: Ribonuclease P protein component (118 aa).

It belongs to the RnpA family. As to quaternary structure, consists of a catalytic RNA component (M1 or rnpB) and a protein subunit.

It catalyses the reaction Endonucleolytic cleavage of RNA, removing 5'-extranucleotides from tRNA precursor.. In terms of biological role, RNaseP catalyzes the removal of the 5'-leader sequence from pre-tRNA to produce the mature 5'-terminus. It can also cleave other RNA substrates such as 4.5S RNA. The protein component plays an auxiliary but essential role in vivo by binding to the 5'-leader sequence and broadening the substrate specificity of the ribozyme. The polypeptide is Ribonuclease P protein component (Rickettsia canadensis (strain McKiel)).